The following is a 478-amino-acid chain: H(+)/Cl(-) exchange transporter ClcA (478 aa).

Over 1–32 (MTHSTQQLSPEGVAEGKRGRLIRELVNRDKTP) the chain is Cytoplasmic. The helical transmembrane segment at 33-69 (LIILIMAAVVGVVTGLLGVAFDRGVDWVQQQRLLALA) threads the bilayer. The Periplasmic segment spans residues 70 to 76 (NVADSAL). A helical transmembrane segment spans residues 77–100 (LVWPLAFIMSALLAMMGYFLVSRF). Residues 106–110 (GSGIP) carry the Selectivity filter part_1 motif. Ser-107 is a binding site for chloride. The segment at residues 109–116 (IPEIEGAM) is an intramembrane region (helical). At 117-123 (EEMRPVR) the chain is on the cytoplasmic side. 2 consecutive transmembrane segments (helical) span residues 124–141 (WWRV…TLGA) and 148–166 (EGPM…VDIF). A Selectivity filter part_2 motif is present at residues 146–150 (GREGP). The Cytoplasmic segment spans residues 167 to 176 (RLRSPEARHS). 2 intramembrane regions (helical) span residues 177–189 (LLAT…LSAA) and 193–201 (PLAGILFVI). Over 202-214 (EEMRSQFRYSLVS) the chain is Cytoplasmic. A helical membrane pass occupies residues 215-232 (IKAVFIGVITSTIVYRYF). At 233–252 (NGERAIIEVGKLSDAPLNTL) the chain is on the periplasmic side. The chain crosses the membrane as a helical span at residues 253–281 (WLYLLLGIIFGAVGVIFNALIFRTQDMFV). Residues 282-287 (RFHGGD) lie on the Cytoplasmic side of the membrane. A helical membrane pass occupies residues 288–309 (WRKLVLIGGLLGGMCGLLALLH). At 310–329 (GNAVGGGFALIPIAAAGNFS) the chain is on the periplasmic side. Helical transmembrane passes span 330-349 (IGML…LCFG) and 355-376 (GIFA…LSCA). The short motif at 355-359 (GIFAP) is the Selectivity filter part_3 element. Positions 356 and 357 each coordinate chloride. The Periplasmic segment spans residues 377–386 (HFFPQYGIEA). The segment at residues 387 to 401 (GTFAIAGMGALFAAS) is an intramembrane region (helical). Residues 402 to 404 (VRA) constitute an intramembrane region (note=Loop between two helices). The segment at residues 405 to 416 (PLTGIVLVLEMT) is an intramembrane region (helical). The note=Loop between two helices intramembrane region spans 417 to 421 (DNYQL). A helical membrane pass occupies residues 422-438 (ILPMIVTCLGATLIAQF). Residues 439 to 478 (MGGKPLYSAILARTLAKQEQARATVIAQEPAVENTPQTGR) lie on the Cytoplasmic side of the membrane. Residue Tyr-445 participates in chloride binding.

Belongs to the chloride channel (TC 2.A.49) family. ClcA subfamily. As to quaternary structure, homodimer.

The protein resides in the cell inner membrane. The enzyme catalyses 2 chloride(in) + H(+)(out) = 2 chloride(out) + H(+)(in). Its function is as follows. Proton-coupled chloride transporter. Functions as antiport system and exchanges two chloride ions for 1 proton. Probably acts as an electrical shunt for an outwardly-directed proton pump that is linked to amino acid decarboxylation, as part of the extreme acid resistance (XAR) response. The chain is H(+)/Cl(-) exchange transporter ClcA from Yersinia pseudotuberculosis serotype IB (strain PB1/+).